The sequence spans 108 residues: Ig kappa chain V-V region MOPC 173 (108 aa).

Positions 1-23 (DIQMTQTTSSLSASLGDRVTISC) are framework-1. A disulfide bridge connects residues Cys23 and Cys88. The tract at residues 24–34 (SASQSIGNYLB) is complementarity-determining-1. A framework-2 region spans residues 35-49 (WYQQKPDGTVKLLIY). The segment at 50–56 (YTSSLHS) is complementarity-determining-2. A framework-3 region spans residues 57–88 (GVPSRFSGSGSGTDYSLTISBLZPZBIATYYC). Positions 89–97 (QQYSKLPRT) are complementarity-determining-3. Residues 98-108 (FGGGTKLEIKR) are framework-4.

The protein is Ig kappa chain V-V region MOPC 173 of Mus musculus (Mouse).